A 31-amino-acid polypeptide reads, in one-letter code: MSDIN-like toxin proprotein 4 (31 aa).

The propeptide occupies 1-10; it reads MSDINGTRLP. Positions 11–16 form a cross-link, cyclopeptide (Trp-Pro); that stretch reads WLATCP. The propeptide occupies 17-31; the sequence is CVGEDVNPTLSRGER.

Belongs to the MSDIN fungal toxin family. Post-translationally, processed by the macrocyclase-peptidase enzyme POPB to yield a toxic cyclic hexapeptide. POPB first removes 10 residues from the N-terminus. Conformational trapping of the remaining peptide forces the enzyme to release this intermediate rather than proceed to macrocyclization. The enzyme rebinds the remaining peptide in a different conformation and catalyzes macrocyclization of the N-terminal 6 residues.

Probable toxin that belongs to the MSDIN-like toxin family responsible for a large number of food poisoning cases and deaths. This Amanita phalloides (Death cap) protein is MSDIN-like toxin proprotein 4.